The following is a 285-amino-acid chain: 2-dehydro-3-deoxyphosphooctonate aldolase (285 aa).

This sequence belongs to the KdsA family.

Its subcellular location is the cytoplasm. The catalysed reaction is D-arabinose 5-phosphate + phosphoenolpyruvate + H2O = 3-deoxy-alpha-D-manno-2-octulosonate-8-phosphate + phosphate. It functions in the pathway carbohydrate biosynthesis; 3-deoxy-D-manno-octulosonate biosynthesis; 3-deoxy-D-manno-octulosonate from D-ribulose 5-phosphate: step 2/3. The protein operates within bacterial outer membrane biogenesis; lipopolysaccharide biosynthesis. The protein is 2-dehydro-3-deoxyphosphooctonate aldolase of Bordetella bronchiseptica (strain ATCC BAA-588 / NCTC 13252 / RB50) (Alcaligenes bronchisepticus).